A 751-amino-acid chain; its full sequence is Cellulose synthase-like protein G3 (751 aa).

2 consecutive transmembrane segments (helical) span residues 47–67 (IYAVFHTCGIIALMYHHVHSL) and 72–92 (TTLITSLLLLSDIVLAFMWAT). Catalysis depends on residues Asp-161 and Asp-466. Helical transmembrane passes span 543 to 563 (CWAFWSLPLIVYGFLPQLALL), 577 to 597 (FWLYIVLFLGAYGQDLLDFVL), 617 to 639 (FSSHLFGFIEFTLKTLNLSTHGF), 674 to 694 (TVAIVNLLAFVWGLYGLFAWG), 697 to 717 (LVLELMLASFAVVNCLPIYEA), and 731 to 751 (VCFVAGILTFVLIVSGYVFLK).

It belongs to the glycosyltransferase 2 family. Plant cellulose synthase-like G subfamily.

Its subcellular location is the golgi apparatus membrane. Its function is as follows. Thought to be a Golgi-localized beta-glycan synthase that polymerize the backbones of noncellulosic polysaccharides (hemicelluloses) of plant cell wall. The sequence is that of Cellulose synthase-like protein G3 (CSLG3) from Arabidopsis thaliana (Mouse-ear cress).